We begin with the raw amino-acid sequence, 294 residues long: Nucleotide-binding protein CA_C0511 (294 aa).

8–15 contributes to the ATP binding site; that stretch reads GLSGAGKT. 59-62 serves as a coordination point for GTP; sequence DIRG.

This sequence belongs to the RapZ-like family.

Functionally, displays ATPase and GTPase activities. The protein is Nucleotide-binding protein CA_C0511 of Clostridium acetobutylicum (strain ATCC 824 / DSM 792 / JCM 1419 / IAM 19013 / LMG 5710 / NBRC 13948 / NRRL B-527 / VKM B-1787 / 2291 / W).